We begin with the raw amino-acid sequence, 328 residues long: Transcription factor bHLH25 (328 aa).

The segment at 125 to 152 (PHQKSDEFNRKGTKRAQPFSRNQSNAQD) is disordered. Residues 148-197 (SNAQDHIIAERKRREKLTQRFVALSALVPGLKKMDKASVLGDALKHIKYL) enclose the bHLH domain.

In terms of assembly, homodimer. As to expression, expressed in flowers.

It is found in the nucleus. This is Transcription factor bHLH25 (BHLH25) from Arabidopsis thaliana (Mouse-ear cress).